The chain runs to 942 residues: E3 ubiquitin-protein ligase HACE1 (942 aa).

ANK repeat units follow at residues 23-55 (LPDDNETAVYTLMPMVMADQHRSVSELLSNSKF), 64-93 (VKRSLLHIAANCGSVECLVLLLKKGANPNY), 97-126 (SGCTPLHLAARNGQKKCMSKLLEYSADVNI), 130-159 (EGLTAIHWLAVNGRTELLHDLVQHVSNVDV), 163-192 (MGQTALHVACQNGHKTTVQCLLDSGADINR), 196-226 (SGATPLYFACSHGQRDTAQILLMRGAKYLPD), and 228-253 (NGITPLDLCVQGGYGETCEVLIQYHP). The segment at 428–459 (KGPDHQDATPTPSFAAAGTESRKELSTDTGDS) is disordered. Over residues 447–459 (ESRKELSTDTGDS) the composition is skewed to basic and acidic residues. The HECT domain occupies 607-942 (NCAKLKQGIA…HCGSYGYTMA (336 aa)). The Glycyl thioester intermediate role is filled by Cys-909.

It localises to the golgi apparatus. Its subcellular location is the golgi stack membrane. The protein localises to the cytoplasm. The protein resides in the endoplasmic reticulum. It carries out the reaction S-ubiquitinyl-[E2 ubiquitin-conjugating enzyme]-L-cysteine + [acceptor protein]-L-lysine = [E2 ubiquitin-conjugating enzyme]-L-cysteine + N(6)-ubiquitinyl-[acceptor protein]-L-lysine.. It participates in protein modification; protein ubiquitination. Functionally, E3 ubiquitin-protein ligase involved in Golgi membrane fusion and regulation of small GTPases. Acts as a regulator of Golgi membrane dynamics during the cell cycle: recruited to Golgi membrane by Rab proteins and regulates postmitotic Golgi membrane fusion. Acts by mediating ubiquitination during mitotic Golgi disassembly, ubiquitination serving as a signal for Golgi reassembly later, after cell division. The sequence is that of E3 ubiquitin-protein ligase HACE1 (HACE1) from Gallus gallus (Chicken).